Here is a 382-residue protein sequence, read N- to C-terminus: Dodecanoyl-[acyl-carrier-protein] hydrolase, chloroplastic (382 aa).

Residues 1-83 (MATTSLASAF…FSAAEKQWTN (83 aa)) constitute a chloroplast transit peptide. Residues Asn283, His285, and Cys320 contribute to the active site.

This sequence belongs to the acyl-ACP thioesterase family.

Its subcellular location is the plastid. The protein resides in the chloroplast. The catalysed reaction is dodecanoyl-[ACP] + H2O = dodecanoate + holo-[ACP] + H(+). Its function is as follows. Plays an essential role in chain termination during de novo fatty acid synthesis. High thioesterase activity for myristoyl-ACP. This Cinnamomum camphora (Camphor tree) protein is Dodecanoyl-[acyl-carrier-protein] hydrolase, chloroplastic.